We begin with the raw amino-acid sequence, 436 residues long: 3-phosphoshikimate 1-carboxyvinyltransferase (436 aa).

The 3-phosphoshikimate site is built by K22, S23, and R27. K22 serves as a coordination point for phosphoenolpyruvate. G95 and R123 together coordinate phosphoenolpyruvate. The 3-phosphoshikimate site is built by S170, S171, Q172, S201, D322, and K349. Q172 contributes to the phosphoenolpyruvate binding site. Catalysis depends on D322, which acts as the Proton acceptor. Residues R353, R397, and K422 each coordinate phosphoenolpyruvate.

Belongs to the EPSP synthase family. Monomer.

It is found in the cytoplasm. It carries out the reaction 3-phosphoshikimate + phosphoenolpyruvate = 5-O-(1-carboxyvinyl)-3-phosphoshikimate + phosphate. The protein operates within metabolic intermediate biosynthesis; chorismate biosynthesis; chorismate from D-erythrose 4-phosphate and phosphoenolpyruvate: step 6/7. Catalyzes the transfer of the enolpyruvyl moiety of phosphoenolpyruvate (PEP) to the 5-hydroxyl of shikimate-3-phosphate (S3P) to produce enolpyruvyl shikimate-3-phosphate and inorganic phosphate. The protein is 3-phosphoshikimate 1-carboxyvinyltransferase of Ralstonia nicotianae (strain ATCC BAA-1114 / GMI1000) (Ralstonia solanacearum).